A 443-amino-acid polypeptide reads, in one-letter code: L-seryl-tRNA(Sec) selenium transferase (443 aa).

N6-(pyridoxal phosphate)lysine is present on K285.

Belongs to the SelA family. Requires pyridoxal 5'-phosphate as cofactor.

The protein resides in the cytoplasm. It catalyses the reaction L-seryl-tRNA(Sec) + selenophosphate + H(+) = L-selenocysteinyl-tRNA(Sec) + phosphate. Its pathway is aminoacyl-tRNA biosynthesis; selenocysteinyl-tRNA(Sec) biosynthesis; selenocysteinyl-tRNA(Sec) from L-seryl-tRNA(Sec) (bacterial route): step 1/1. In terms of biological role, converts seryl-tRNA(Sec) to selenocysteinyl-tRNA(Sec) required for selenoprotein biosynthesis. The chain is L-seryl-tRNA(Sec) selenium transferase from Campylobacter lari (strain RM2100 / D67 / ATCC BAA-1060).